Reading from the N-terminus, the 104-residue chain is MGLYRPSKFFHPPIPHIPFTINPDFFSFHIQRLKAKANPENFLICFPPPDIYKGFVFCCQLDLVHLFSYVFFLFLLKICVDVLQYVIYPKHFTHKKPGFENYSI.

The chain crosses the membrane as a helical span at residues 63–83 (LVHLFSYVFFLFLLKICVDVL).

Its subcellular location is the membrane. In terms of biological role, may be involved in a pathway contributing to genomic integrity. The protein is Increased recombination centers protein 13 (IRC13) of Saccharomyces cerevisiae (strain ATCC 204508 / S288c) (Baker's yeast).